The following is a 339-amino-acid chain: Hairy/enhancer-of-split related with YRPW motif protein 2 (339 aa).

Residues 1–52 (MKRPCEETTSESDLDETIDVGSENNYPGHATSSVMRSNSPTTTSQIMARKKR) are disordered. Positions 8–18 (TTSESDLDETI) are enriched in acidic residues. A compositionally biased stretch (polar residues) spans 22–46 (SENNYPGHATSSVMRSNSPTTTSQI). Positions 47–116 (MARKKRRGII…GGKGYFDAHA (70 aa)) are transcriptional repression and interaction with NCOR1 and SIN3A. The 56-residue stretch at 48–103 (ARKKRRGIIEKRRRDRINNSLSELRRLVPTAFEKQGSAKLEKAEILQMTVDHLKML) folds into the bHLH domain. An Orange domain is found at 122–157 (MSIGFRECLTEVARYLSSVEGLDPSDPLRVRLVSHL). A disordered region spans residues 310 to 339 (SVSAASSPQQTSTGTNNKPYQPWGTEVGAF). Residues 318-328 (QQTSTGTNNKP) are compositionally biased toward polar residues. The short motif at 329–332 (YQPW) is the YQPW motif element.

This sequence belongs to the HEY family. As to quaternary structure, may self-associate. Interacts with ARNT. Interacts with GATA4, GATA6, HES1 and HEYL. Interacts with HDAC1, NCOR1 and SIN3A. Highly expressed in the aorta, lower expression detected in the heart, brain, kidney, lung, muscle, ovary and testis.

It is found in the nucleus. Its function is as follows. Transcriptional repressor which functions as a downstream effector of Notch signaling in cardiovascular development. Specifically required for the Notch-induced endocardial epithelial to mesenchymal transition, which is itself criticial for cardiac valve and septum development. May be required in conjunction with HEY1 to specify arterial cell fate or identity. Promotes maintenance of neuronal precursor cells and glial versus neuronal fate specification. Binds preferentially to the canonical E box sequence 5'-CACGTG-3'. Represses transcription by the cardiac transcriptional activators GATA4 and GATA6 and by the neuronal bHLH factors ASCL1/MASH1 and NEUROD4/MATH3. The chain is Hairy/enhancer-of-split related with YRPW motif protein 2 (Hey2) from Mus musculus (Mouse).